We begin with the raw amino-acid sequence, 176 residues long: Membrane-anchored junction protein (176 aa).

The Nuclear portion of the chain corresponds to 1–151 (MSLKPFTYPF…QHNSPPPKER (151 aa)). Positions 59–150 (AVMRKRKHMD…LQHNSPPPKE (92 aa)) are disordered. Residues 95-107 (PPVETRRNRERKT) are compositionally biased toward basic and acidic residues. A compositionally biased stretch (polar residues) spans 108-120 (QQGLQETLASDIT). The helical transmembrane segment at 152–170 (AATGFFGFLSSLFPFRYFF) threads the bilayer. Topologically, residues 171–176 (RKSSHS) are perinuclear space.

This sequence belongs to the MAJIN family. In terms of assembly, component of the MAJIN-TERB1-TERB2 complex, composed of MAJIN, TERB1 and TERB2.

The protein localises to the nucleus inner membrane. It is found in the chromosome. It localises to the telomere. Its function is as follows. Meiosis-specific telomere-associated protein involved in meiotic telomere attachment to the nucleus inner membrane, a crucial step for homologous pairing and synapsis. Component of the MAJIN-TERB1-TERB2 complex, which promotes telomere cap exchange by mediating attachment of telomeric DNA to the inner nuclear membrane and replacement of the protective cap of telomeric chromosomes: in early meiosis, the MAJIN-TERB1-TERB2 complex associates with telomeric DNA and the shelterin/telosome complex. During prophase, the complex matures and promotes release of the shelterin/telosome complex from telomeric DNA. In the complex, MAJIN acts as the anchoring subunit to the nucleus inner membrane. MAJIN shows DNA-binding activity, possibly for the stabilization of telomere attachment on the nucleus inner membrane. This is Membrane-anchored junction protein from Homo sapiens (Human).